We begin with the raw amino-acid sequence, 275 residues long: Mitochondrial prohibitin complex protein 1 (275 aa).

The stretch at 180–213 forms a coiled coil; sequence REFTEAVEMKQVAQQEAEKARYLVEKAEQMKIAA.

The protein belongs to the prohibitin family. As to quaternary structure, high molecular weight complex that consist of phb-1 and phb-2.

Its subcellular location is the mitochondrion inner membrane. Its function is as follows. PHB proteins are essential during embryonic development and are required for somatic and germline differentiation in the larval gonad. A deficiency in PHB proteins results in altered mitochondrial biogenesis in body wall muscle cells. This is Mitochondrial prohibitin complex protein 1 (phb-1) from Caenorhabditis elegans.